The following is a 334-amino-acid chain: Phosphate acyltransferase (334 aa).

Belongs to the PlsX family. Homodimer. Probably interacts with PlsY.

The protein resides in the cytoplasm. It carries out the reaction a fatty acyl-[ACP] + phosphate = an acyl phosphate + holo-[ACP]. Its pathway is lipid metabolism; phospholipid metabolism. Functionally, catalyzes the reversible formation of acyl-phosphate (acyl-PO(4)) from acyl-[acyl-carrier-protein] (acyl-ACP). This enzyme utilizes acyl-ACP as fatty acyl donor, but not acyl-CoA. In Mycoplasmopsis agalactiae (strain NCTC 10123 / CIP 59.7 / PG2) (Mycoplasma agalactiae), this protein is Phosphate acyltransferase.